The primary structure comprises 142 residues: Large ribosomal subunit protein uL22 (142 aa).

Residues 122–142 (RAEAPEETKPSRGTNKEQKAA) form a disordered region.

This sequence belongs to the universal ribosomal protein uL22 family. In terms of assembly, part of the 50S ribosomal subunit.

This protein binds specifically to 23S rRNA; its binding is stimulated by other ribosomal proteins, e.g. L4, L17, and L20. It is important during the early stages of 50S assembly. It makes multiple contacts with different domains of the 23S rRNA in the assembled 50S subunit and ribosome. Functionally, the globular domain of the protein is located near the polypeptide exit tunnel on the outside of the subunit, while an extended beta-hairpin is found that lines the wall of the exit tunnel in the center of the 70S ribosome. In Gluconobacter oxydans (strain 621H) (Gluconobacter suboxydans), this protein is Large ribosomal subunit protein uL22.